The primary structure comprises 209 residues: Uracil phosphoribosyltransferase (209 aa).

5-phospho-alpha-D-ribose 1-diphosphate contacts are provided by residues Arg79, Arg104, and 131–139; that span reads DPMLATGNS. Uracil-binding positions include Ile194 and 199-201; that span reads GDA. Residue Asp200 participates in 5-phospho-alpha-D-ribose 1-diphosphate binding.

This sequence belongs to the UPRTase family. Requires Mg(2+) as cofactor.

It catalyses the reaction UMP + diphosphate = 5-phospho-alpha-D-ribose 1-diphosphate + uracil. It functions in the pathway pyrimidine metabolism; UMP biosynthesis via salvage pathway; UMP from uracil: step 1/1. With respect to regulation, allosterically activated by GTP. Functionally, catalyzes the conversion of uracil and 5-phospho-alpha-D-ribose 1-diphosphate (PRPP) to UMP and diphosphate. In Agrobacterium fabrum (strain C58 / ATCC 33970) (Agrobacterium tumefaciens (strain C58)), this protein is Uracil phosphoribosyltransferase.